Reading from the N-terminus, the 403-residue chain is Methylthioribose-1-phosphate isomerase (403 aa).

The active-site Proton donor is aspartate 280.

This sequence belongs to the eIF-2B alpha/beta/delta subunits family. MtnA subfamily.

The protein resides in the cytoplasm. Its subcellular location is the nucleus. It carries out the reaction 5-(methylsulfanyl)-alpha-D-ribose 1-phosphate = 5-(methylsulfanyl)-D-ribulose 1-phosphate. It participates in amino-acid biosynthesis; L-methionine biosynthesis via salvage pathway; L-methionine from S-methyl-5-thio-alpha-D-ribose 1-phosphate: step 1/6. In terms of biological role, catalyzes the interconversion of methylthioribose-1-phosphate (MTR-1-P) into methylthioribulose-1-phosphate (MTRu-1-P). This is Methylthioribose-1-phosphate isomerase from Eremothecium gossypii (strain ATCC 10895 / CBS 109.51 / FGSC 9923 / NRRL Y-1056) (Yeast).